The following is a 232-amino-acid chain: Octanoyltransferase (232 aa).

Residues 43–231 form the BPL/LPL catalytic domain; it reads LPTSNYLLFV…HLTHLFEAEI (189 aa). Substrate contacts are provided by residues 88–95, 160–162, and 173–175; these read RGGDITYH, AMG, and GFA. The active-site Acyl-thioester intermediate is C191.

This sequence belongs to the LipB family.

It is found in the cytoplasm. The enzyme catalyses octanoyl-[ACP] + L-lysyl-[protein] = N(6)-octanoyl-L-lysyl-[protein] + holo-[ACP] + H(+). Its pathway is protein modification; protein lipoylation via endogenous pathway; protein N(6)-(lipoyl)lysine from octanoyl-[acyl-carrier-protein]: step 1/2. Its function is as follows. Catalyzes the transfer of endogenously produced octanoic acid from octanoyl-acyl-carrier-protein onto the lipoyl domains of lipoate-dependent enzymes. Lipoyl-ACP can also act as a substrate although octanoyl-ACP is likely to be the physiological substrate. The chain is Octanoyltransferase from Flavobacterium johnsoniae (strain ATCC 17061 / DSM 2064 / JCM 8514 / BCRC 14874 / CCUG 350202 / NBRC 14942 / NCIMB 11054 / UW101) (Cytophaga johnsonae).